The primary structure comprises 137 residues: Aspartate 1-decarboxylase (137 aa).

Serine 25 acts as the Schiff-base intermediate with substrate; via pyruvic acid in catalysis. Serine 25 is subject to Pyruvic acid (Ser). Position 57 (threonine 57) interacts with substrate. The Proton donor role is filled by tyrosine 58. 73-75 contributes to the substrate binding site; it reads GAA.

Belongs to the PanD family. Heterooctamer of four alpha and four beta subunits. Requires pyruvate as cofactor. Is synthesized initially as an inactive proenzyme, which is activated by self-cleavage at a specific serine bond to produce a beta-subunit with a hydroxyl group at its C-terminus and an alpha-subunit with a pyruvoyl group at its N-terminus.

Its subcellular location is the cytoplasm. The enzyme catalyses L-aspartate + H(+) = beta-alanine + CO2. It participates in cofactor biosynthesis; (R)-pantothenate biosynthesis; beta-alanine from L-aspartate: step 1/1. Catalyzes the pyruvoyl-dependent decarboxylation of aspartate to produce beta-alanine. This chain is Aspartate 1-decarboxylase, found in Thermobifida fusca (strain YX).